Reading from the N-terminus, the 392-residue chain is Integrin-linked kinase-associated serine/threonine phosphatase 2C (392 aa).

Met-1 bears the N-acetylmethionine mark. The interval 1 to 90 (MDLFGDLPEP…TSEEEKNGSE (90 aa)) is disordered. Residue Ser-13 is modified to Phosphoserine. Over residues 56 to 70 (SGDSGSLATSISQMV) the composition is skewed to polar residues. The segment covering 72–90 (TEGKGAKRKTSEEEKNGSE) has biased composition (basic and acidic residues). Residues 108–390 (KGYVAERKGE…DNVTVMVVRI (283 aa)) enclose the PPM-type phosphatase domain. Asp-152 and Gly-153 together coordinate Mn(2+). N6-acetyllysine is present on Lys-210. Mn(2+)-binding residues include Asp-326 and Asp-381.

It belongs to the PP2C family. In terms of assembly, interacts with ILK. Specific association with ILK is independent of the catalytic activity of either partner. Requires Mg(2+) as cofactor. Mn(2+) serves as cofactor. In terms of tissue distribution, widely expressed. Highest levels expressed in striated muscle. Much lower levels evident in various smooth muscle tissues.

It localises to the cytoplasm. The enzyme catalyses O-phospho-L-seryl-[protein] + H2O = L-seryl-[protein] + phosphate. The catalysed reaction is O-phospho-L-threonyl-[protein] + H2O = L-threonyl-[protein] + phosphate. Its activity is regulated as follows. Inhibited rather than stimulated by magnesium. Its function is as follows. Protein phosphatase that may play a role in regulation of cell cycle progression via dephosphorylation of its substrates whose appropriate phosphorylation states might be crucial for cell proliferation. Selectively associates with integrin linked kinase (ILK), to modulate cell adhesion and growth factor signaling. Inhibits the ILK-GSK3B signaling axis and may play an important role in inhibiting oncogenic transformation. The polypeptide is Integrin-linked kinase-associated serine/threonine phosphatase 2C (ILKAP) (Homo sapiens (Human)).